A 197-amino-acid polypeptide reads, in one-letter code: MFGGNMRIFEVMRETKETNIYLKINIDGTGKYKIDTGIPFFDHLLASFAKHGCFDLIVKARGDLEIDDHHTVEDVGICLGLALNQIEKRNIFRFGWAIIPMDDARATVAIDLSGRSYCVGNYEPKREFVGDLATENINHFFESVASYGMLNIHYEVIGKNEHHKAEALFKAFGVALDLATKIDERKGVISTKGEVKL.

It belongs to the imidazoleglycerol-phosphate dehydratase family.

The protein localises to the cytoplasm. The catalysed reaction is D-erythro-1-(imidazol-4-yl)glycerol 3-phosphate = 3-(imidazol-4-yl)-2-oxopropyl phosphate + H2O. Its pathway is amino-acid biosynthesis; L-histidine biosynthesis; L-histidine from 5-phospho-alpha-D-ribose 1-diphosphate: step 6/9. In Methanocaldococcus jannaschii (strain ATCC 43067 / DSM 2661 / JAL-1 / JCM 10045 / NBRC 100440) (Methanococcus jannaschii), this protein is Imidazoleglycerol-phosphate dehydratase.